The chain runs to 377 residues: Protein-tyrosine sulfotransferase 2 (377 aa).

Topologically, residues 1–8 are cytoplasmic; sequence MRLSVRRV. The helical; Signal-anchor for type II membrane protein transmembrane segment at 9–25 threads the bilayer; sequence LLAAGCALVLVLAVQLG. Residues 26–377 are Lumenal-facing; the sequence is QQVLECRAVL…NSTSSHLGSS (352 aa). 78 to 82 contacts 3'-phosphoadenylyl sulfate; that stretch reads RSGTT. A disulfide bridge links Cys-96 with Cys-156. Glu-99 (proton donor/acceptor) is an active-site residue. The tract at residues 101-105 is interaction with peptide substrate; sequence RIIPR. 3'-phosphoadenylyl sulfate-binding residues include Arg-183, Ser-191, and Arg-195. Cysteines 225 and 233 form a disulfide. Residues Tyr-238, 285-294, and Lys-300 contribute to the 3'-phosphoadenylyl sulfate site; that span reads STDQVIKPVN. N-linked (GlcNAc...) asparagine glycosylation is found at Asn-343 and Asn-368.

It belongs to the protein sulfotransferase family. Homodimer. Can also form heterodimers with TPST1. N-glycosylated. As to expression, widely expressed.

It is found in the golgi apparatus membrane. It catalyses the reaction L-tyrosyl-[protein] + 3'-phosphoadenylyl sulfate = O-sulfo-L-tyrosine-[protein] + adenosine 3',5'-bisphosphate + H(+). Functionally, catalyzes the O-sulfation of tyrosine residues within acidic motifs of polypeptides, using 3'-phosphoadenylyl sulfate (PAPS) as cosubstrate. The chain is Protein-tyrosine sulfotransferase 2 (TPST2) from Homo sapiens (Human).